The sequence spans 701 residues: Glycine--tRNA ligase beta subunit (701 aa).

This sequence belongs to the class-II aminoacyl-tRNA synthetase family. Tetramer of two alpha and two beta subunits.

It localises to the cytoplasm. The enzyme catalyses tRNA(Gly) + glycine + ATP = glycyl-tRNA(Gly) + AMP + diphosphate. This chain is Glycine--tRNA ligase beta subunit, found in Nitratidesulfovibrio vulgaris (strain DSM 19637 / Miyazaki F) (Desulfovibrio vulgaris).